The following is a 419-amino-acid chain: Putative BTB/POZ domain-containing protein L85 (419 aa).

The BTB domain maps to Thr-16 to Glu-89. The disordered stretch occupies residues Ser-250–His-290. Over residues Glu-263–His-290 the composition is skewed to basic and acidic residues.

This sequence belongs to the mimivirus BTB/WD family.

The polypeptide is Putative BTB/POZ domain-containing protein L85 (Acanthamoeba polyphaga (Amoeba)).